A 125-amino-acid chain; its full sequence is Evasin P672 (125 aa).

The signal sequence occupies residues Met-1–Ala-21. Asn-35, Asn-55, Asn-65, Asn-72, Asn-78, Asn-104, Asn-112, and Asn-118 each carry an N-linked (GlcNAc...) asparagine glycan. 3 disulfides stabilise this stretch: Cys-70/Cys-110, Cys-87/Cys-115, and Cys-105/Cys-124.

The protein localises to the secreted. In terms of biological role, salivary chemokine-binding protein which has chemokine-neutralizing activity and binds to host chemokines CCL1, CCL2, CCL3, CCL3L1, CCL7, CCL8, CCL11, CCL12, CCL13, CCL14, CCL15, CCL16, CCL18 and CCL23. Binds to CCL8 with 1:1 stoichiometry and disrupts CCL8 homodimer formation. The chain is Evasin P672 from Rhipicephalus pulchellus (Yellow backed tick).